Here is a 459-residue protein sequence, read N- to C-terminus: ATP synthase subunit beta (459 aa).

Position 149–156 (149–156 (GGAGVGKT)) interacts with ATP.

The protein belongs to the ATPase alpha/beta chains family. F-type ATPases have 2 components, CF(1) - the catalytic core - and CF(0) - the membrane proton channel. CF(1) has five subunits: alpha(3), beta(3), gamma(1), delta(1), epsilon(1). CF(0) has three main subunits: a(1), b(2) and c(9-12). The alpha and beta chains form an alternating ring which encloses part of the gamma chain. CF(1) is attached to CF(0) by a central stalk formed by the gamma and epsilon chains, while a peripheral stalk is formed by the delta and b chains.

Its subcellular location is the cell inner membrane. The enzyme catalyses ATP + H2O + 4 H(+)(in) = ADP + phosphate + 5 H(+)(out). Produces ATP from ADP in the presence of a proton gradient across the membrane. The catalytic sites are hosted primarily by the beta subunits. The sequence is that of ATP synthase subunit beta from Pseudomonas syringae pv. syringae (strain B728a).